We begin with the raw amino-acid sequence, 465 residues long: 23S rRNA (uracil(1939)-C(5))-methyltransferase RlmD (465 aa).

Positions 1–22 are disordered; it reads MSEAVPTSARKSKNAPVAPGPA. Positions 16 to 80 constitute a TRAM domain; that stretch reads PVAPGPAPVL…PSYEQATVVD (65 aa). Residues Cys-93, Cys-99, Cys-102, and Cys-181 each contribute to the [4Fe-4S] cluster site. The S-adenosyl-L-methionine site is built by Gln-289, Phe-318, Asn-323, Glu-339, Asn-367, and Asp-388. The Nucleophile role is filled by Cys-421.

Belongs to the class I-like SAM-binding methyltransferase superfamily. RNA M5U methyltransferase family. RlmD subfamily.

The catalysed reaction is uridine(1939) in 23S rRNA + S-adenosyl-L-methionine = 5-methyluridine(1939) in 23S rRNA + S-adenosyl-L-homocysteine + H(+). Its function is as follows. Catalyzes the formation of 5-methyl-uridine at position 1939 (m5U1939) in 23S rRNA. The chain is 23S rRNA (uracil(1939)-C(5))-methyltransferase RlmD from Burkholderia cenocepacia (strain HI2424).